Reading from the N-terminus, the 329-residue chain is D-alanine--D-alanine ligase (329 aa).

Residues 120–326 (KLWLSAIGIP…FAHYLEQILR (207 aa)) enclose the ATP-grasp domain. An ATP-binding site is contributed by 150–205 (ALAKWGKVFIKAASQGSSVGCYSASNETDLLQGIKDAFGYSEQVLIEKAVKPRELE). Residues D280, E293, and N295 each contribute to the Mg(2+) site.

It belongs to the D-alanine--D-alanine ligase family. It depends on Mg(2+) as a cofactor. Mn(2+) is required as a cofactor.

Its subcellular location is the cytoplasm. It carries out the reaction 2 D-alanine + ATP = D-alanyl-D-alanine + ADP + phosphate + H(+). The protein operates within cell wall biogenesis; peptidoglycan biosynthesis. Functionally, cell wall formation. The sequence is that of D-alanine--D-alanine ligase from Aeromonas salmonicida (strain A449).